A 295-amino-acid polypeptide reads, in one-letter code: Secreted frizzled-related protein 2 (295 aa).

The signal sequence occupies residues 1–24 (MLQGPGSLLLLFLASHCCLGSARG). One can recognise an FZ domain in the interval 35-155 (YKRSNCKPIP…PQDNDLCIPL (121 aa)). Intrachain disulfides connect cysteine 40-cysteine 103, cysteine 50-cysteine 96, cysteine 87-cysteine 125, cysteine 114-cysteine 152, cysteine 118-cysteine 142, cysteine 172-cysteine 245, cysteine 175-cysteine 247, and cysteine 190-cysteine 295. Positions 172-295 (CEACKNKNDD…ISRSIRKLQC (124 aa)) constitute an NTR domain.

It belongs to the secreted frizzled-related protein (sFRP) family. As to expression, expressed in adipose tissue, heart, brain, skeletal muscle, pancreas, thymus, prostate, testis, ovary, small intestine and colon. Highest levels in adipose tissue, small intestine and colon.

It localises to the secreted. Functionally, soluble frizzled-related proteins (sFRPS) function as modulators of Wnt signaling through direct interaction with Wnts. They have a role in regulating cell growth and differentiation in specific cell types. SFRP2 may be important for eye retinal development and for myogenesis. The sequence is that of Secreted frizzled-related protein 2 (SFRP2) from Homo sapiens (Human).